The following is a 156-amino-acid chain: MIYKTKLGEIDIRDEDILYFNEGIPGFTHLRKFALIPIQNQPIQWLTSIEDPFVALPVVDPWLVCIDYSLTLTDEDIQDLDIKDKNDVGILSILTIPKGCPEKTTINLLAPIVINLKNRKAKQIIQENSSYSVKHLVKDEIERSQSLLKKSKTGSE.

This sequence belongs to the FliW family. In terms of assembly, interacts with translational regulator CsrA and flagellin(s).

The protein localises to the cytoplasm. Its function is as follows. Acts as an anti-CsrA protein, binds CsrA and prevents it from repressing translation of its target genes, one of which is flagellin. Binds to flagellin and participates in the assembly of the flagellum. This chain is Flagellar assembly factor FliW, found in Pseudothermotoga lettingae (strain ATCC BAA-301 / DSM 14385 / NBRC 107922 / TMO) (Thermotoga lettingae).